Here is a 302-residue protein sequence, read N- to C-terminus: Methionyl-tRNA formyltransferase (302 aa).

(6S)-5,6,7,8-tetrahydrofolate is bound at residue 103 to 106 (SLLP).

Belongs to the Fmt family.

It carries out the reaction L-methionyl-tRNA(fMet) + (6R)-10-formyltetrahydrofolate = N-formyl-L-methionyl-tRNA(fMet) + (6S)-5,6,7,8-tetrahydrofolate + H(+). Functionally, attaches a formyl group to the free amino group of methionyl-tRNA(fMet). The formyl group appears to play a dual role in the initiator identity of N-formylmethionyl-tRNA by promoting its recognition by IF2 and preventing the misappropriation of this tRNA by the elongation apparatus. The protein is Methionyl-tRNA formyltransferase of Pseudothermotoga lettingae (strain ATCC BAA-301 / DSM 14385 / NBRC 107922 / TMO) (Thermotoga lettingae).